A 309-amino-acid polypeptide reads, in one-letter code: Sulfate adenylyltransferase subunit 2 (309 aa).

Belongs to the PAPS reductase family. CysD subfamily. Heterodimer composed of CysD, the smaller subunit, and CysN.

The enzyme catalyses sulfate + ATP + H(+) = adenosine 5'-phosphosulfate + diphosphate. It functions in the pathway sulfur metabolism; hydrogen sulfide biosynthesis; sulfite from sulfate: step 1/3. In terms of biological role, with CysN forms the ATP sulfurylase (ATPS) that catalyzes the adenylation of sulfate producing adenosine 5'-phosphosulfate (APS) and diphosphate, the first enzymatic step in sulfur assimilation pathway. APS synthesis involves the formation of a high-energy phosphoric-sulfuric acid anhydride bond driven by GTP hydrolysis by CysN coupled to ATP hydrolysis by CysD. This chain is Sulfate adenylyltransferase subunit 2, found in Methylorubrum populi (strain ATCC BAA-705 / NCIMB 13946 / BJ001) (Methylobacterium populi).